The following is a 278-amino-acid chain: Multidrug-efflux transporter 1 regulator (278 aa).

In terms of domain architecture, HTH merR-type spans 5-75 (YYSIGEVSKL…LEEMKKAQDL (71 aa)). A DNA-binding region (H-T-H motif) is located at residues 8-27 (IGEVSKLANVSIKALRYYDK).

In terms of assembly, binds DNA as a homodimer.

Functionally, activates transcription of the bmr gene in response to structurally dissimilar drugs. Binds rhodamine as an inducer. The sequence is that of Multidrug-efflux transporter 1 regulator (bmrR) from Bacillus subtilis (strain 168).